Here is a 390-residue protein sequence, read N- to C-terminus: Chorismate synthase (390 aa).

The NADP(+) site is built by arginine 48 and arginine 54. FMN contacts are provided by residues 125 to 127, 238 to 239, glycine 278, 293 to 297, and arginine 319; these read RSS, NA, and KPTSS. Residues 359-390 are disordered; the sequence is PRIPGSTTNQIHPVEMQASAPRAEDPEPDESS.

Belongs to the chorismate synthase family. As to quaternary structure, homotetramer. FMNH2 serves as cofactor.

The catalysed reaction is 5-O-(1-carboxyvinyl)-3-phosphoshikimate = chorismate + phosphate. The protein operates within metabolic intermediate biosynthesis; chorismate biosynthesis; chorismate from D-erythrose 4-phosphate and phosphoenolpyruvate: step 7/7. In terms of biological role, catalyzes the anti-1,4-elimination of the C-3 phosphate and the C-6 proR hydrogen from 5-enolpyruvylshikimate-3-phosphate (EPSP) to yield chorismate, which is the branch point compound that serves as the starting substrate for the three terminal pathways of aromatic amino acid biosynthesis. This reaction introduces a second double bond into the aromatic ring system. This chain is Chorismate synthase, found in Nitrosomonas europaea (strain ATCC 19718 / CIP 103999 / KCTC 2705 / NBRC 14298).